Reading from the N-terminus, the 352-residue chain is Uroporphyrinogen decarboxylase (352 aa).

Substrate contacts are provided by residues 26 to 30 (RQAGR), phenylalanine 45, aspartate 76, tyrosine 153, serine 208, and histidine 323.

It belongs to the uroporphyrinogen decarboxylase family. In terms of assembly, homodimer.

It localises to the cytoplasm. It catalyses the reaction uroporphyrinogen III + 4 H(+) = coproporphyrinogen III + 4 CO2. It participates in porphyrin-containing compound metabolism; protoporphyrin-IX biosynthesis; coproporphyrinogen-III from 5-aminolevulinate: step 4/4. In terms of biological role, catalyzes the decarboxylation of four acetate groups of uroporphyrinogen-III to yield coproporphyrinogen-III. This Parasynechococcus marenigrum (strain WH8102) protein is Uroporphyrinogen decarboxylase.